We begin with the raw amino-acid sequence, 243 residues long: Zinc import ATP-binding protein ZnuC 2 (243 aa).

The ABC transporter domain maps to 3-218 (LSLHQLSVKF…PEYKVLFGLD (216 aa)). Residue 35–42 (GPNGSGKS) participates in ATP binding.

It belongs to the ABC transporter superfamily. Zinc importer (TC 3.A.1.15.5) family. The complex is composed of two ATP-binding proteins (ZnuC), two transmembrane proteins (ZnuB) and a solute-binding protein (ZnuA).

The protein localises to the cell inner membrane. It carries out the reaction Zn(2+)(out) + ATP(in) + H2O(in) = Zn(2+)(in) + ADP(in) + phosphate(in) + H(+)(in). In terms of biological role, part of the ABC transporter complex ZnuABC involved in zinc import. Responsible for energy coupling to the transport system. This is Zinc import ATP-binding protein ZnuC 2 from Aliivibrio fischeri (strain ATCC 700601 / ES114) (Vibrio fischeri).